The following is a 56-amino-acid chain: Hydrophobic protein LTI6A (56 aa).

The next 2 helical transmembrane spans lie at 11 to 31 (IILAIILPPLGVFFKFGCGIE) and 34 to 54 (ICLLLTFFGYLPGIIYAVWVI).

This sequence belongs to the UPF0057 (PMP3) family. In terms of tissue distribution, expressed in shoot of cold stressed seedlings.

It localises to the membrane. Plays a role in the regulation of membrane potential. Could mediate a proton leak. This Oryza sativa subsp. japonica (Rice) protein is Hydrophobic protein LTI6A (LTI6A).